Here is a 593-residue protein sequence, read N- to C-terminus: Aspartate--tRNA ligase (593 aa).

E173 lines the L-aspartate pocket. The aspartate stretch occupies residues 197–200 (QLFK). Residue R219 coordinates L-aspartate. ATP contacts are provided by residues 219–221 (RDE) and Q228. Residue H449 participates in L-aspartate binding. ATP is bound at residue E483. Residue R490 participates in L-aspartate binding. 535 to 538 (GLDR) serves as a coordination point for ATP.

Belongs to the class-II aminoacyl-tRNA synthetase family. Type 1 subfamily. Homodimer.

The protein resides in the cytoplasm. It catalyses the reaction tRNA(Asp) + L-aspartate + ATP = L-aspartyl-tRNA(Asp) + AMP + diphosphate. Functionally, catalyzes the attachment of L-aspartate to tRNA(Asp) in a two-step reaction: L-aspartate is first activated by ATP to form Asp-AMP and then transferred to the acceptor end of tRNA(Asp). This Shewanella piezotolerans (strain WP3 / JCM 13877) protein is Aspartate--tRNA ligase.